The sequence spans 2403 residues: Highly reducing polyketide synthase fogA (2403 aa).

The 426-residue stretch at 3–428 folds into the Ketosynthase family 3 (KS3) domain; it reads DDPPCIVGMA…GANAHVILES (426 aa). Catalysis depends on for beta-ketoacyl synthase activity residues cysteine 176, histidine 311, and histidine 350. Positions 538–858 are malonyl-CoA:ACP transacylase (MAT) domain; the sequence is VFTGQGAQYA…PYAPSLVRKE (321 aa). Serine 632 acts as the For malonyltransferase activity in catalysis. The segment at 929–1068 is N-terminal hotdog fold; sequence HELLGTFALT…GSIRVVEPLT (140 aa). The segment at 929-1238 is dehydratase (DH) domain; that stretch reads HELLGTFALT…DARMSLYTGK (310 aa). One can recognise a PKS/mFAS DH domain in the interval 929 to 1241; sequence HELLGTFALT…MSLYTGKSSA (313 aa). The active-site Proton acceptor; for dehydratase activity is the histidine 961. A C-terminal hotdog fold region spans residues 1084–1241; the sequence is SFEASPTNRW…MSLYTGKSSA (158 aa). Catalysis depends on aspartate 1152, which acts as the Proton donor; for dehydratase activity. Residues 1663–1981 are enoyl reductase (ER) domain; the sequence is GATDSMFFQQ…QQDRIGKIVI (319 aa). Positions 2006 to 2185 are ketoreductase (KR) domain; it reads VYLLIGCLGG…AVAVGLGMIS (180 aa). The segment at 2280-2300 is disordered; it reads AQNSTSSSGSNSNTPTTAAPW. Positions 2282–2296 are enriched in low complexity; sequence NSTSSSGSNSNTPTT. The region spanning 2320–2398 is the Carrier domain; the sequence is SLNAAILRLI…GLAVVVEGKL (79 aa). At serine 2357 the chain carries O-(pantetheine 4'-phosphoryl)serine.

Pantetheine 4'-phosphate serves as cofactor.

The protein operates within secondary metabolite biosynthesis. Functionally, highly reducing polyketide synthase; part of the gene cluster that mediates the biosynthesis of flavoglaucin and congeners (including aspergin, dihydroauroglaucin and auroglaucin), prenylated salicylaldehyde derivatives carrying a saturated or an unsaturated C-7 side chain. FogA releases the carboxylic acid (8E,10E,12E)-3,5,7-trihydroxytetradeca-8,10,12-trienoic acid as its product, as well as derivatives with one and two double bonds. FogA is indeed able to reduce the initial triketide, thus being at least partially responsible for the differently saturated heptyl side chains of flavoglaucin congeners. The oxidoreductases fogB, fogC and fogD modify the nascent polyketide in fogA-bound form and, together, fogA, fogB, fogC and fogD are necessary for the formation of the aromatic core and the cyclized PKS products are released as salicyl alcohols. In particular, fogB is responsible for oxidation of a hydroxyl group or reduction of remaining double bond(s) at the C-7 residue whereas fogD is probably involved in the reductive release of the modified PKS products. The cytochrome P450 monooxygenase fogE is then responsible for the hydroxylation at C-3 of the benzene ring. The fogE products are substrates of the prenyltransferase fogH and the prenylated benzyl alcohols are subsequently oxidized by the fogF to produce the final aryl aldehydes flavoglaucin and congeners. The short-chain dehydrogenase fogG does not seem to be involved in the biosynthesis of the prenylated salicylaldehyde derivatives. The sequence is that of Highly reducing polyketide synthase fogA from Aspergillus ruber (strain CBS 135680).